Here is an 84-residue protein sequence, read N- to C-terminus: RNA-binding protein Hfq (84 aa).

The 61-residue stretch at 11–71 folds into the Sm domain; the sequence is DTFLNHVRKN…ISTIMPGHPV (61 aa).

It belongs to the Hfq family. In terms of assembly, homohexamer.

Functionally, RNA chaperone that binds small regulatory RNA (sRNAs) and mRNAs to facilitate mRNA translational regulation in response to envelope stress, environmental stress and changes in metabolite concentrations. Also binds with high specificity to tRNAs. This Methylorubrum populi (strain ATCC BAA-705 / NCIMB 13946 / BJ001) (Methylobacterium populi) protein is RNA-binding protein Hfq.